The chain runs to 72 residues: Small ribosomal subunit protein eS31 (72 aa).

Residues C32, C35, C51, and C54 each contribute to the Zn(2+) site. Residues 32 to 54 (CPRCGSVMAYHKEPVPRWHCGKC) form a C4-type zinc finger.

The protein belongs to the eukaryotic ribosomal protein eS31 family. Part of the 30S ribosomal subunit. Zn(2+) is required as a cofactor.

The polypeptide is Small ribosomal subunit protein eS31 (Caldivirga maquilingensis (strain ATCC 700844 / DSM 13496 / JCM 10307 / IC-167)).